The chain runs to 2138 residues: DNA polymerase epsilon catalytic subunit B (2138 aa).

The short motif at 1224–1231 (EKRKWKMT) is the Nuclear localization signal 1 element. Positions 2015, 2018, 2040, and 2045 each coordinate Zn(2+). The CysA-type zinc finger occupies 2015-2045 (CSNCGAYRDLDFCRDSALLTEKEWSCADPQC). [4Fe-4S] cluster-binding residues include Cys-2076, Cys-2079, Cys-2091, and Cys-2093. The short motif at 2076–2093 (CNRCNQVKAAHLTEQCEC) is the CysB motif element. The short motif at 2107-2114 (HKRIEIFL) is the Nuclear localization signal 2 element.

Belongs to the DNA polymerase type-B family. As to quaternary structure, heterotetramer. It depends on [4Fe-4S] cluster as a cofactor. Mostly expressed at low levels in inflorescence (floral meristem and flowers until anthesis), and, to a lower extent, in seeds.

It is found in the nucleus. It catalyses the reaction DNA(n) + a 2'-deoxyribonucleoside 5'-triphosphate = DNA(n+1) + diphosphate. DNA polymerase II, which participates in chromosomal DNA replication. Involved in the determination of cell fate during plant embryogenesis. Contributes to the flowering time repression. This Arabidopsis thaliana (Mouse-ear cress) protein is DNA polymerase epsilon catalytic subunit B (POL2B).